A 348-amino-acid chain; its full sequence is Phenylalanine--tRNA ligase alpha subunit (348 aa).

Glu259 is a binding site for Mg(2+).

This sequence belongs to the class-II aminoacyl-tRNA synthetase family. Phe-tRNA synthetase alpha subunit type 1 subfamily. As to quaternary structure, tetramer of two alpha and two beta subunits. The cofactor is Mg(2+).

The protein localises to the cytoplasm. The enzyme catalyses tRNA(Phe) + L-phenylalanine + ATP = L-phenylalanyl-tRNA(Phe) + AMP + diphosphate + H(+). This chain is Phenylalanine--tRNA ligase alpha subunit, found in Lacticaseibacillus paracasei (strain ATCC 334 / BCRC 17002 / CCUG 31169 / CIP 107868 / KCTC 3260 / NRRL B-441) (Lactobacillus paracasei).